The primary structure comprises 292 residues: AhcY transcriptional activator HvrB (292 aa).

In terms of domain architecture, HTH lysR-type spans P10–T67. Positions F27–R46 form a DNA-binding region, H-T-H motif.

It belongs to the LysR transcriptional regulatory family.

Functions as a low-light activator of ahcY expression (gene for S-adenosyl-L-homocysteine hydrolase) and as a high-light activator of an uncharacterized 21.6 kDa protein in the ahcY-hvrB intergenic region (orf5). It is also a negative regulator of its own expression. The sequence is that of AhcY transcriptional activator HvrB (hvrB) from Rhodobacter capsulatus (strain ATCC BAA-309 / NBRC 16581 / SB1003).